The sequence spans 97 residues: MHRILAEKSVNITELRKNPAKYFIDQPVAVLSNNRPAGYLLSASAFEALMDMLAEQEEKKPIKARFRPSAARLEEITRRAEQYLNDMTDDDFNDFKE.

This sequence belongs to the phD/YefM antitoxin family. In terms of assembly, probably forms a complex with the mRNA interferase YafO which inhibits the mRNA interferase activity.

In terms of biological role, antitoxin component of a type II toxin-antitoxin (TA) system. Functions as an mRNA interferase antitoxin; overexpression prevents YafO-mediated cessation of cell growth and inhibition of cell proliferation. The polypeptide is Antitoxin YafN (yafN) (Escherichia coli (strain K12)).